The primary structure comprises 517 residues: Ribosome assembly protein 4 (517 aa).

The disordered stretch occupies residues 1 to 25 (MATLAPPPSKRQRREEIQRTQTQQD). A ubiquitin-like (UBL) domain region spans residues 34-128 (LGSFKANFID…TITLSAEPQA (95 aa)). WD repeat units lie at residues 144–184 (GHGQ…PKFT), 187–226 (GHTG…QVNQ), 230–277 (GHAK…HVLS), 278–316 (GHKG…LVHN), 351–397 (EERR…SKPV), 402–441 (GHQN…FIKN), 444–483 (GHVA…LAMD), and 486–517 (GHED…TWRN).

It belongs to the NLE1/RSA4 family. As to quaternary structure, associates with the pre-60S ribosomal particle. Interacts (via WD repeats) with uL18. Interacts (via UBL domain) with MDN1 (via VWFA/MIDAS domain). Interacts (via WD repeats) with NSA2.

Its subcellular location is the nucleus. The protein localises to the nucleolus. Its function is as follows. Involved in ribosome biogenesis. Required for processing and efficient intra-nuclear transport of pre-60S ribosomal subunits. Interacts with the AAA-ATPase Midasin, which is essential for the ATP-dependent dissociation of a group of nonribosomal factors from the pre-60S particle. The polypeptide is Ribosome assembly protein 4 (Chaetomium thermophilum (strain DSM 1495 / CBS 144.50 / IMI 039719) (Thermochaetoides thermophila)).